The chain runs to 102 residues: Monothiol glutaredoxin-S8 (102 aa).

The region spanning Met-1–Trp-101 is the Glutaredoxin domain. Cys-21 contacts [2Fe-2S] cluster. Residues Ala-99 to Leu-102 carry the Responsive for interaction with TGA factors motif.

Belongs to the glutaredoxin family. CC-type subfamily.

Its subcellular location is the cytoplasm. It localises to the nucleus. Its function is as follows. May only reduce GSH-thiol disulfides, but not protein disulfides. This chain is Monothiol glutaredoxin-S8 (GRXS8), found in Arabidopsis thaliana (Mouse-ear cress).